The sequence spans 220 residues: Thymidylate kinase (220 aa).

10–17 (GIDGCGKS) is an ATP binding site.

It belongs to the thymidylate kinase family.

The enzyme catalyses dTMP + ATP = dTDP + ADP. Functionally, phosphorylation of dTMP to form dTDP in both de novo and salvage pathways of dTTP synthesis. The protein is Thymidylate kinase of Prochlorococcus marinus (strain SARG / CCMP1375 / SS120).